Reading from the N-terminus, the 230-residue chain is Large ribosomal subunit protein uL1 (230 aa).

Belongs to the universal ribosomal protein uL1 family. Part of the 50S ribosomal subunit.

Its function is as follows. Binds directly to 23S rRNA. The L1 stalk is quite mobile in the ribosome, and is involved in E site tRNA release. Functionally, protein L1 is also a translational repressor protein, it controls the translation of the L11 operon by binding to its mRNA. The chain is Large ribosomal subunit protein uL1 from Oenococcus oeni (strain ATCC BAA-331 / PSU-1).